The sequence spans 426 residues: Histidine--tRNA ligase (426 aa).

The protein belongs to the class-II aminoacyl-tRNA synthetase family. Homodimer.

It localises to the cytoplasm. The catalysed reaction is tRNA(His) + L-histidine + ATP = L-histidyl-tRNA(His) + AMP + diphosphate + H(+). This chain is Histidine--tRNA ligase, found in Shewanella baltica (strain OS223).